The following is a 670-amino-acid chain: Protein HBS1 (670 aa).

Disordered stretches follow at residues 60–88 and 164–202; these read KDIQEEEADEDEDEDAAFAKARRDSESFQ and KTVSKTVPTPPPKISLKEPRRGFEIPSPKVPSSPVVSGR. Positions 63 to 75 are enriched in acidic residues; the sequence is QEEEADEDEDEDA. Residues 189–200 are compositionally biased toward low complexity; the sequence is PSPKVPSSPVVS. Residues 245–468 form the tr-type G domain; sequence KSHIHMIVIG…DVIENFKIPE (224 aa). Residues 254–261 are G1; that stretch reads GHVDAGKS. Residue 254–261 coordinates GTP; that stretch reads GHVDAGKS. The interval 310 to 314 is G2; sequence GITMD. A G3 region spans residues 331–334; the sequence is DAPG. GTP contacts are provided by residues 393 to 396 and 432 to 434; these read NKLD and SGL. Residues 393-396 are G4; that stretch reads NKLD. Positions 432–434 are G5; the sequence is SGL.

It belongs to the TRAFAC class translation factor GTPase superfamily. Classic translation factor GTPase family. Component of the Pelota-HBS1L complex, also named Dom34-Hbs1 complex, composed of pelo and HBS1. As to expression, expressed in ovaries (at protein level).

The protein localises to the cytoplasm. The enzyme catalyses GTP + H2O = GDP + phosphate + H(+). GTPase component of the Pelota-HBS1L complex, a complex that recognizes stalled ribosomes and triggers the No-Go Decay (NGD) pathway. The Pelota-HBS1L complex recognizes ribosomes stalled at the 3' end of an mRNA and engages stalled ribosomes by destabilizing mRNA in the mRNA channel. Following ribosome-binding, the Pelota-HBS1L complex promotes recruitment of pix, which drives the disassembly of stalled ribosomes, followed by degradation of damaged mRNAs as part of the NGD pathway. Together with pelo, required for transposon silencing in the ovary and testis. Together with pelo, promotes meiosis and spermatid individualization during spermatogenesis. This chain is Protein HBS1, found in Drosophila melanogaster (Fruit fly).